A 502-amino-acid chain; its full sequence is TNF receptor-associated factor family protein DDB_G0268444 (502 aa).

Residues 28 to 68 (CSICYESVYKKEIYQCKEIHWFCKTCWAESLFKKKECMICR) form an RING-type; degenerate zinc finger. TRAF-type zinc fingers lie at residues 129 to 183 (KHLK…SRSL) and 185 to 243 (NHYK…PKSN). The stretch at 261–295 (IESQSLQIKETNIKYENLLNKINKLEQLETESKCD) forms a coiled coil. Residues 368–489 (KYKNRWSISN…DDSLVIDFSI (122 aa)) enclose the MATH domain.

Belongs to the TNF receptor-associated factor family. A subfamily.

The protein resides in the cytoplasm. Probable adapter protein and signal transducer that links members of the tumor necrosis factor receptor family to different signaling pathways by association with the receptor cytoplasmic domain and kinases. The protein is TNF receptor-associated factor family protein DDB_G0268444 of Dictyostelium discoideum (Social amoeba).